Here is a 373-residue protein sequence, read N- to C-terminus: Flagellar P-ring protein (373 aa).

An N-terminal signal peptide occupies residues 1–28 (MPSVSAVILKLAAAALSALLLSGVAANA).

Belongs to the FlgI family. As to quaternary structure, the basal body constitutes a major portion of the flagellar organelle and consists of four rings (L,P,S, and M) mounted on a central rod.

It is found in the periplasm. Its subcellular location is the bacterial flagellum basal body. Assembles around the rod to form the L-ring and probably protects the motor/basal body from shearing forces during rotation. This Rhodopseudomonas palustris (strain HaA2) protein is Flagellar P-ring protein.